The following is a 526-amino-acid chain: Peptide chain release factor 3 (526 aa).

One can recognise a tr-type G domain in the interval 9–277; that stretch reads DRRRTFAIVS…TFVDHAPAPL (269 aa). GTP-binding positions include 18 to 25, 86 to 90, and 140 to 143; these read SHPDAGKT, DTPGH, and NKLD.

This sequence belongs to the TRAFAC class translation factor GTPase superfamily. Classic translation factor GTPase family. PrfC subfamily.

It is found in the cytoplasm. Functionally, increases the formation of ribosomal termination complexes and stimulates activities of RF-1 and RF-2. It binds guanine nucleotides and has strong preference for UGA stop codons. It may interact directly with the ribosome. The stimulation of RF-1 and RF-2 is significantly reduced by GTP and GDP, but not by GMP. The sequence is that of Peptide chain release factor 3 from Geobacter sulfurreducens (strain ATCC 51573 / DSM 12127 / PCA).